The chain runs to 945 residues: Alanine--tRNA ligase (945 aa).

Zn(2+)-binding residues include His-564, His-568, Cys-666, and His-670. Positions Ser-911–Gly-945 are disordered.

This sequence belongs to the class-II aminoacyl-tRNA synthetase family. Requires Zn(2+) as cofactor.

The protein resides in the cytoplasm. It catalyses the reaction tRNA(Ala) + L-alanine + ATP = L-alanyl-tRNA(Ala) + AMP + diphosphate. Its function is as follows. Catalyzes the attachment of alanine to tRNA(Ala) in a two-step reaction: alanine is first activated by ATP to form Ala-AMP and then transferred to the acceptor end of tRNA(Ala). Also edits incorrectly charged Ser-tRNA(Ala) and Gly-tRNA(Ala) via its editing domain. In Rhodopirellula baltica (strain DSM 10527 / NCIMB 13988 / SH1), this protein is Alanine--tRNA ligase.